The primary structure comprises 98 residues: uncharacterized protein (98 aa).

This is an uncharacterized protein from Rickettsia conorii (strain ATCC VR-613 / Malish 7).